A 593-amino-acid polypeptide reads, in one-letter code: Aspartate--tRNA ligase (593 aa).

Residue Glu180 coordinates L-aspartate. An aspartate region spans residues 204 to 207; that stretch reads QIFK. Arg226 serves as a coordination point for L-aspartate. ATP is bound by residues 226-228 and Gln235; that span reads RDE. Residue His453 participates in L-aspartate binding. Residue Glu487 coordinates ATP. Arg494 is a binding site for L-aspartate. 539–542 contributes to the ATP binding site; that stretch reads GLDR.

It belongs to the class-II aminoacyl-tRNA synthetase family. Type 1 subfamily. In terms of assembly, homodimer.

It is found in the cytoplasm. The enzyme catalyses tRNA(Asp) + L-aspartate + ATP = L-aspartyl-tRNA(Asp) + AMP + diphosphate. Catalyzes the attachment of L-aspartate to tRNA(Asp) in a two-step reaction: L-aspartate is first activated by ATP to form Asp-AMP and then transferred to the acceptor end of tRNA(Asp). The sequence is that of Aspartate--tRNA ligase from Clostridium botulinum (strain Okra / Type B1).